A 297-amino-acid chain; its full sequence is Vacuolar protein sorting-associated protein 26C (297 aa).

Belongs to the VPS26 family. In terms of assembly, component of the commander complex that is essential for endosomal recycling of transmembrane cargos; the commander complex is composed of the CCC subcomplex and the retriever subcomplex. Component of the heterotrimeric retriever complex consisting of VPS26C, VPS29 and VPS35L; within the complex interacts with VPS35L. Interacts with SNX17 (via C-terminus); the interaction is direct and associates SNX17 with the retriever complex. Interacts with SNX31; the interaction is direct.

It is found in the endosome. Component of the commander complex that is essential for endosomal recycling of transmembrane cargos; the commander complex is composed of the CCC subcomplex and the retriever subcomplex. Component of the retriever complex, which is a heterotrimeric complex related to retromer cargo-selective complex (CSC) and essential for retromer-independent retrieval and recycling of numerous cargos such as integrin alpha-5/beta-1 (ITGA5:ITGB1). The recruitment of the retriever complex to the endosomal membrane involves CCC and WASH complexes. In the endosomes, drives the retriever and recycling of NxxY-motif-containing cargo proteins by coupling to SNX17, a cargo essential for the homeostatic maintenance of numerous cell surface proteins associated with processes that include cell migration, cell adhesion, nutrient supply and cell signaling. This Mus musculus (Mouse) protein is Vacuolar protein sorting-associated protein 26C.